Here is a 226-residue protein sequence, read N- to C-terminus: Thioredoxin domain-containing protein 9 (226 aa).

The Thioredoxin domain maps to 52-180; the sequence is LEALKKAQQQ…TTETLEWRLG (129 aa). 3 positions are modified to phosphoserine: serine 188, serine 221, and serine 223.

Forms ternary complexes with the chaperonin TCP1 complex, spanning the cylindrical chaperonin cavity and contacting at least 2 subunits.

It is found in the cytoplasm. Its subcellular location is the nucleus. It localises to the cytoskeleton. The protein resides in the microtubule organizing center. The protein localises to the centrosome. It is found in the midbody. Significantly diminishes the chaperonin TCP1 complex ATPase activity, thus negatively impacts protein folding, including that of actin or tubulin. The sequence is that of Thioredoxin domain-containing protein 9 (TXNDC9) from Bos taurus (Bovine).